The sequence spans 555 residues: MSSFSYEPYYSTSYKRRYVETPRVHISSVRSGYSTARSAYSSYSAPVSSSLSVRRSYSSSSGSLMPSLESLDLSQVAAISNDLKSIRTQEKAQLQDLNDRFASFIERVHELEQQNKVLEAELLVLRQKHSEPSRFRALYEQEIRDLRLAAEDATNEKQALQGEREGLEETLRNLQARYEEEVLSREDAEGRLMEARKGADEAALARAELEKRIDSLMDEIAFLKKVHEEEIAELQAQIQYAQISVEMDVSSKPDLSAALKDIRAQYEKLAAKNMQNAEEWFKSRFTVLTESAAKNTDAVRAAKDEVSESRRLLKAKTLEIEACRGMNEALEKQLQELEDKQNADISAMQDTINKLENELRTTKSEMARYLKEYQDLLNVKMALDIEIAAYRKLLEGEETRLSFTSVGSLTTGYTQSSQVFGRSAYGGLQTSSYLMSARSFPSYYTSHVQEEQIEVEETIEAAKAEEAKDEPPSEGEAEEEEKEKEEAEAEAEAEAEAEAEEEEGAQEEEAAKEDAEEAKEEEGGEGEEAEETKEAEEEEKKDEGAGEEQATKKKD.

Ser-2 carries the post-translational modification N-acetylserine. The segment at Ser-2 to Gln-93 is head. At Arg-23 the chain carries Asymmetric dimethylarginine; alternate. Arg-23 bears the Omega-N-methylarginine; alternate mark. Residue Arg-30 is modified to Omega-N-methylarginine. Tyr-43 is subject to Phosphotyrosine. 3 positions are modified to phosphoserine: Ser-56, Ser-67, and Ser-103. Residues Glu-90–Leu-401 form the IF rod domain. Residues Leu-94–Leu-125 form a coil 1A region. The segment at Arg-126 to Leu-138 is linker 1. The segment at Tyr-139 to Leu-234 is coil 1B. The linker 12 stretch occupies residues Gln-235 to Pro-253. Residues Asp-254–Lys-272 are coil 2A. Residues Asn-273 to Phe-281 are linker 2. The segment at Lys-282–Glu-397 is coil 2B. Positions Glu-398–Tyr-444 are tail, subdomain A. A tail region spans residues Glu-398–Asp-555. Residues Thr-445–Asp-555 are tail, subdomain B (acidic). Residues Lys-463–Asp-555 form a disordered region. The segment covering Pro-472 to Lys-540 has biased composition (acidic residues). Position 473 is a phosphoserine (Ser-473). A Phosphothreonine modification is found at Thr-532. Positions Lys-541–Asp-555 are enriched in basic and acidic residues.

The protein belongs to the intermediate filament family. Forms homodimers (in vitro). Forms heterodimers with NEFH or NEFM; which can further hetero-oligomerize (in vitro). Forms heterodimers with INA (in vitro). Interacts with ARHGEF28. Interacts with TRIM2. In terms of processing, O-glycosylated. Phosphorylated in the head and rod regions by the PKC kinase PKN1, leading to the inhibition of polymerization. Post-translationally, ubiquitinated in the presence of TRIM2 and UBE2D1.

The protein resides in the cell projection. It localises to the axon. Its subcellular location is the cytoplasm. The protein localises to the cytoskeleton. In terms of biological role, neurofilaments usually contain three intermediate filament proteins: NEFL, NEFM, and NEFH which are involved in the maintenance of neuronal caliber. May additionally cooperate with the neuronal intermediate filament proteins PRPH and INA to form neuronal filamentous networks. The sequence is that of Neurofilament light polypeptide (NEFL) from Bos taurus (Bovine).